The following is a 417-amino-acid chain: RH-like protein IIF (417 aa).

11 helical membrane-spanning segments follow: residues 12–32 (CLPL…YFFT), 44–64 (LVAS…GFGF), 77–97 (VAFN…LDGF), 125–145 (ISAG…MVLV), 172–192 (FYLF…KPLP), 203–223 (TIPS…WPSF), 238–258 (VFNT…GSSL), 265–285 (ISMT…GTSC), 287–307 (LIPS…ISIG), 331–351 (NFSL…VRHT), and 358–378 (MIGF…AIAL).

The protein belongs to the ammonium transporter (TC 2.A.49) family. Rh subfamily.

The protein localises to the membrane. Functionally, may be part of an oligomeric complex which is likely to have a transport or channel function in the erythrocyte membrane. The sequence is that of RH-like protein IIF from Pan troglodytes (Chimpanzee).